Consider the following 748-residue polypeptide: Antigen peptide transporter 1 (748 aa).

At Met1–Leu15 the chain is on the cytoplasmic side. The helical transmembrane segment at Pro16–Leu36 threads the bilayer. Residues Arg37–Pro53 are Lumenal-facing. Residues Leu54 to Leu76 traverse the membrane as a helical segment. The Cytoplasmic portion of the chain corresponds to Arg77–Trp92. The chain crosses the membrane as a helical span at residues Leu93 to Phe113. The Lumenal segment spans residues Arg114–Trp133. The chain crosses the membrane as a helical span at residues Gly134–Trp154. The Cytoplasmic portion of the chain corresponds to His155 to Arg186. Residues Leu187–Phe207 traverse the membrane as a helical segment. Residues Leu187–Lys470 enclose the ABC transmembrane type-1 domain. Topologically, residues Thr208–Asn227 are lumenal. The helical transmembrane segment at Leu228–Ile248 threads the bilayer. The Cytoplasmic segment spans residues Tyr249–Ser298. The chain crosses the membrane as a helical span at residues Leu299–Ile319. The Lumenal segment spans residues Met320–Thr328. Residues Met329–Tyr349 form a helical membrane-spanning segment. Topologically, residues Gln350 to Ser418 are cytoplasmic. Residues Pro375–Met420 are part of the peptide-binding site. Residues Gly419–Val439 form a helical membrane-spanning segment. At Ser440–Asn443 the chain is on the lumenal side. A helical transmembrane segment spans residues Leu444–Ile464. The segment at Gln453–Arg487 is part of the peptide-binding site. Over Tyr465 to Glu748 the chain is Cytoplasmic. The 240-residue stretch at Val503–Ala742 folds into the ABC transporter domain. ATP-binding positions include Gly538–Thr546, Ser641–Gln647, and Gln701. Position 545 (Ser545) interacts with Mg(2+).

Belongs to the ABC transporter superfamily. ABCB family. MHC peptide exporter (TC 3.A.1.209) subfamily. As to quaternary structure, heterodimer of TAP1 and TAP2 (TAP1-TAP2). A component of the peptide loading complex (PLC), interacts via TAPBP with MHCI heterodimer; this interaction mediates peptide-MHCI assembly. Recruits TAPBP in a 1:1 stoichiometry. Interacts with classical MHCI such as HLA-A*02-B2M; this interaction is obligatory for the loading of peptide epitopes. Interacts with non-classical MHCI molecules including HLA-E-B2M and HLA-F-B2M as well as PLC component CALR before the peptide loading. Interacts with PSMB5 and PSMB8. (Microbial infection) Interacts with Epstein-Barr virus BNLF2a. In terms of assembly, (Microbial infection) Interacts with herpes simplex virus US12/ICP47. As to quaternary structure, (Microbial infection) Interacts with adenovirus E3-19K glycoprotein, which binds TAP1-TAP2 and acts as a TAPBP inhibitor, preventing TAP1-TAP2 association with MHCI. It depends on Mg(2+) as a cofactor. In terms of tissue distribution, highly expressed in professional APCs monocytes and dendritic cells as well as in lymphocyte subsets T cells, B cells and NK cells.

The protein resides in the endoplasmic reticulum membrane. The enzyme catalyses a peptide antigen(in) + ATP + H2O = a peptide antigen(out) + ADP + phosphate + H(+). Inhibited at high ER lumenal peptide concentrations. With respect to regulation, (Microbial infection) Inhibited by herpes simplex virus US12/ICP47 protein, which blocks the peptide-binding site of TAP1-TAP2. Its activity is regulated as follows. (Microbial infection) Inhibited by human cytomegalovirus US6 glycoprotein, which binds to the lumenal side of TAP1-TAP2 complex and inhibits peptide translocation by specifically blocking ATP-binding and preventing TAP1-TAP2 conformational rearrangement induced by peptide binding. ABC transporter associated with antigen processing. In complex with TAP2 mediates unidirectional translocation of peptide antigens from cytosol to endoplasmic reticulum (ER) for loading onto MHC class I (MHCI) molecules. Uses the chemical energy of ATP to export peptides against the concentration gradient. During the transport cycle alternates between 'inward-facing' state with peptide binding site facing the cytosol to 'outward-facing' state with peptide binding site facing the ER lumen. Peptide antigen binding to ATP-loaded TAP1-TAP2 induces a switch to hydrolysis-competent 'outward-facing' conformation ready for peptide loading onto nascent MHCI molecules. Subsequently ATP hydrolysis resets the transporter to the 'inward facing' state for a new cycle. Typically transports intracellular peptide antigens of 8 to 13 amino acids that arise from cytosolic proteolysis via IFNG-induced immunoproteasome. Binds peptides with free N- and C-termini, the first three and the C-terminal residues being critical. Preferentially selects peptides having a highly hydrophobic residue at position 3 and hydrophobic or charged residues at the C-terminal anchor. Proline at position 2 has the most destabilizing effect. As a component of the peptide loading complex (PLC), acts as a molecular scaffold essential for peptide-MHCI assembly and antigen presentation. The polypeptide is Antigen peptide transporter 1 (Homo sapiens (Human)).